Reading from the N-terminus, the 215-residue chain is Thymidylate kinase (215 aa).

10–17 is an ATP binding site; sequence GGEGVGKT.

It belongs to the thymidylate kinase family.

The catalysed reaction is dTMP + ATP = dTDP + ADP. Its function is as follows. Phosphorylation of dTMP to form dTDP in both de novo and salvage pathways of dTTP synthesis. The chain is Thymidylate kinase from Bartonella henselae (strain ATCC 49882 / DSM 28221 / CCUG 30454 / Houston 1) (Rochalimaea henselae).